Consider the following 473-residue polypeptide: MATATEQWVLVEMVQALYEAPAYHLILEGILILWIIRLLFSKTYKLQERSDLTVKEKEELIEEWQPEPLVPLVPKDHPALNYNIVSGPPSHKIVVNGKECINFASFNFLGLLDNPRVKAAALASLKKYGVGTCGPRGFYGTFDVHLDLEDRLAKFMKTEEAIIYSYGFATIASAIPAYSKRGDIVFVDRAACFAIQKGLQASRSDIKLFKHNDMADLERLLKEQEIEDQKNPRKARVTRRFIVVEGLYMNTGTICPLPELVKLKYKYKARIFLEESLSFGVLGEHGRGVTEHYGINIDDIDLISANMENALASIGGFCCGRSFVIDHQRLSGQGYCFSASLPPLLAAAAIEALNIMEENPGIFAVLKEKCRQIHKALQGISGLKVVGEPLSPAFHLQLEESTGSREQDVRLLQEIVDQCMNRSIALTQARYLEKEEKCLPPPSIRVVVTVEQTEEELDRAASTIKEVAQAVLL.

The segment at 1-66 (MATATEQWVL…KEELIEEWQP (66 aa)) is interaction with SPTLC2. The helical transmembrane segment at 16-36 (ALYEAPAYHLILEGILILWII) threads the bilayer. The residue at position 164 (Tyr-164) is a Phosphotyrosine; by ABL.

The protein belongs to the class-II pyridoxal-phosphate-dependent aminotransferase family. As to quaternary structure, component of the serine palmitoyltransferase (SPT) complex, which is also composed of SPTLC2 or SPTLC3 and SPTSSA or SPTSSB. The heterodimer with SPTLC2 or SPTLC3 forms the catalytic core of the enzyme, while SPTSSA or SPTSSB subunits determine substrate specificity. SPT also interacts with ORMDL proteins, especially ORMDL3, which negatively regulate SPT activity in the presence of ceramides. Forms dimers of heterodimers with SPTLC2. Interacts with RTN4. The cofactor is pyridoxal 5'-phosphate. Phosphorylation at Tyr-164 inhibits activity and promotes cell survival.

The protein localises to the endoplasmic reticulum membrane. The enzyme catalyses L-serine + hexadecanoyl-CoA + H(+) = 3-oxosphinganine + CO2 + CoA. The catalysed reaction is octadecanoyl-CoA + L-serine + H(+) = 3-oxoeicosasphinganine + CO2 + CoA. It carries out the reaction tetradecanoyl-CoA + L-serine + H(+) = 3-oxohexadecasphinganine + CO2 + CoA. It catalyses the reaction dodecanoyl-CoA + L-serine + H(+) = 3-oxotetradecasphinganine + CO2 + CoA. It participates in lipid metabolism; sphingolipid metabolism. SPT complex catalytic activity is negatively regulated by ORMDL proteins, including ORMDL3, in the presence of ceramides. This mechanism allows to maintain ceramide levels at sufficient concentrations for the production of complex sphingolipids, but which prevents the accumulation of ceramides to levels that trigger apoptosis. Its function is as follows. Component of the serine palmitoyltransferase multisubunit enzyme (SPT) that catalyzes the initial and rate-limiting step in sphingolipid biosynthesis by condensing L-serine and activated acyl-CoA (most commonly palmitoyl-CoA) to form long-chain bases. The SPT complex is also composed of SPTLC2 or SPTLC3 and SPTSSA or SPTSSB. Within this complex, the heterodimer with SPTLC2 or SPTLC3 forms the catalytic core. The composition of the serine palmitoyltransferase (SPT) complex determines the substrate preference. The SPTLC1-SPTLC2-SPTSSA complex shows a strong preference for C16-CoA substrate, while the SPTLC1-SPTLC3-SPTSSA isozyme uses both C14-CoA and C16-CoA as substrates, with a slight preference for C14-CoA. The SPTLC1-SPTLC2-SPTSSB complex shows a strong preference for C18-CoA substrate, while the SPTLC1-SPTLC3-SPTSSB isozyme displays an ability to use a broader range of acyl-CoAs, without apparent preference. Required for adipocyte cell viability and metabolic homeostasis. The chain is Serine palmitoyltransferase 1 (SPTLC1) from Pongo abelii (Sumatran orangutan).